Reading from the N-terminus, the 493-residue chain is Putative BTB/POZ domain-containing protein L35 (493 aa).

In terms of domain architecture, BTB spans 16–87 (TDLKLTLVDD…YLVDNKSEVD (72 aa)).

This sequence belongs to the mimivirus BTB/WD family.

The protein is Putative BTB/POZ domain-containing protein L35 of Acanthamoeba polyphaga (Amoeba).